Reading from the N-terminus, the 109-residue chain is MTTSSYFLLVALGLLLYVCQSSFGNPHTRDSGTTPDRDHSCGGELVDRLVKLCPSNRKRRGFPSMLKARAKRNEAFLLQRDGRVIVGDCCDNYCTDERLKGYCASLLGL.

An N-terminal signal peptide occupies residues 1–24 (MTTSSYFLLVALGLLLYVCQSSFG). The propeptide occupies 25 to 29 (NPHTR). 3 cysteine pairs are disulfide-bonded: cysteine 41-cysteine 90, cysteine 53-cysteine 103, and cysteine 89-cysteine 94. Glutamate 44 is subject to 4-carboxyglutamate. Residues 57-83 (RKRRGFPSMLKARAKRNEAFLLQRDGR) constitute a propeptide, c peptide.

Belongs to the insulin family. As to quaternary structure, heterodimer of A and B chains; disulfide-linked. In terms of tissue distribution, expressed by the venom gland.

Its subcellular location is the secreted. In terms of biological role, this venom insulin, from a fish-hunting cone snail, facilitates prey capture by rapidly inducing hypoglycemic shock. It is one of the smallest known insulin found in nature and lacks the C-terminal segment of the B chain that, in human insulin, mediates engagement of the insulin receptor (INSR) and assembly of the hormone's hexameric storage form. Despite lacking this segment, it both binds and activates human insulin receptor (long isoform (HIR-B)) with a moderate potency (EC(50)=373.2 nM). In vivo, intraperitoneal injection of this peptide into zebrafish lowers blood glucose with a lower potency than human insulin. In addition, when applied to water, this peptide reduces overall locomotor activity of zebrafish larvae, observed as a significant decrease in the percentage of time spent swimming and movement frequency. When tested on a mouse model of diabetes, this insulin also lowers blood glucose with a 20-fold lower potency than human insulin. The sequence is that of Con-Ins K2 from Conus kinoshitai (Kinoshita's cone).